A 136-amino-acid polypeptide reads, in one-letter code: Small ribosomal subunit protein uS19 (136 aa).

It belongs to the universal ribosomal protein uS19 family.

In terms of biological role, protein S19 forms a complex with S13 that binds strongly to the 16S ribosomal RNA. The chain is Small ribosomal subunit protein uS19 from Methanocorpusculum labreanum (strain ATCC 43576 / DSM 4855 / Z).